A 300-amino-acid polypeptide reads, in one-letter code: Ribosomal protein L11 methyltransferase (300 aa).

S-adenosyl-L-methionine contacts are provided by Thr152, Gly173, Asp195, and Asn234.

It belongs to the methyltransferase superfamily. PrmA family.

The protein resides in the cytoplasm. The catalysed reaction is L-lysyl-[protein] + 3 S-adenosyl-L-methionine = N(6),N(6),N(6)-trimethyl-L-lysyl-[protein] + 3 S-adenosyl-L-homocysteine + 3 H(+). In terms of biological role, methylates ribosomal protein L11. The protein is Ribosomal protein L11 methyltransferase of Burkholderia ambifaria (strain ATCC BAA-244 / DSM 16087 / CCUG 44356 / LMG 19182 / AMMD) (Burkholderia cepacia (strain AMMD)).